The chain runs to 1032 residues: Kinesin heavy chain isoform 5A (1032 aa).

Ala-2 carries the N-acetylalanine modification. Residues 9–327 form the Kinesin motor domain; sequence SIKVLCRFRP…LMFGQRAKTI (319 aa). 86–93 contributes to the ATP binding site; sequence GQTSSGKT. Residues 174 to 315 are microtubule-binding; the sequence is VSGPEEILDV…PSSYNDAETK (142 aa). Residues 271 to 361 are necessary for interaction with ZFYVE27; that stretch reads EGTKSYVPYR…KTKAQKETIA (91 aa). The stretch at 331 to 906 forms a coiled coil; that stretch reads ASVNLELTAE…VDRIKEAVRY (576 aa). An interaction with BICD2 region spans residues 353-1032; sequence TKAQKETIAK…FPLHQETAAS (680 aa). Phosphothreonine is present on Thr-397. The tract at residues 904–939 is disordered; that stretch reads VRYKSSGKRGHSAQIAKPVRPGHYPASSPTNPYGTR. Residues 907–1032 form a globular region; it reads KSSGKRGHSA…FPLHQETAAS (126 aa).

Belongs to the TRAFAC class myosin-kinesin ATPase superfamily. Kinesin family. Kinesin subfamily. In terms of assembly, oligomer composed of two heavy chains and two light chains. Interacts with GRIP1. Interacts with FMR1 (via C-terminus); this interaction is increased in a mGluR-dependent manner. Interacts with BORCS5. Interacts with ZFYVE27. Interacts with VAPA, VAPB, SURF4, RAB11A (GDP-bound form), RAB11B (GDP-bound form) and RTN3 in a ZFYVE27-dependent manner. Interacts with BICD2. Interacts with DTNB.

It localises to the cytoplasm. The protein resides in the perinuclear region. Its subcellular location is the cytoskeleton. It is found in the perikaryon. It carries out the reaction ATP + H2O + a kinesin associated with a microtubule at position (n) = ADP + phosphate a kinesin associated with a microtubule at position (n+1, toward the plus end).. In terms of biological role, microtubule-dependent motor required for slow axonal transport of neurofilament proteins (NFH, NFM and NFL). Can induce formation of neurite-like membrane protrusions in non-neuronal cells in a ZFYVE27-dependent manner. The ZFYVE27-KIF5A complex contributes to the vesicular transport of VAPA, VAPB, SURF4, RAB11A, RAB11B and RTN3 proteins in neurons. Required for anterograde axonal transportation of MAPK8IP3/JIP3 which is essential for MAPK8IP3/JIP3 function in axon elongation. The polypeptide is Kinesin heavy chain isoform 5A (KIF5A) (Pongo abelii (Sumatran orangutan)).